We begin with the raw amino-acid sequence, 468 residues long: 3-isopropylmalate dehydratase large subunit (468 aa).

Cys347, Cys408, and Cys411 together coordinate [4Fe-4S] cluster.

The protein belongs to the aconitase/IPM isomerase family. LeuC type 1 subfamily. As to quaternary structure, heterodimer of LeuC and LeuD. It depends on [4Fe-4S] cluster as a cofactor.

It carries out the reaction (2R,3S)-3-isopropylmalate = (2S)-2-isopropylmalate. The protein operates within amino-acid biosynthesis; L-leucine biosynthesis; L-leucine from 3-methyl-2-oxobutanoate: step 2/4. Catalyzes the isomerization between 2-isopropylmalate and 3-isopropylmalate, via the formation of 2-isopropylmaleate. This chain is 3-isopropylmalate dehydratase large subunit, found in Methylobacillus flagellatus (strain ATCC 51484 / DSM 6875 / VKM B-1610 / KT).